Consider the following 874-residue polypeptide: Alanine--tRNA ligase (874 aa).

Residues His563, His567, Cys665, and His669 each contribute to the Zn(2+) site.

Belongs to the class-II aminoacyl-tRNA synthetase family. The cofactor is Zn(2+).

The protein resides in the cytoplasm. The catalysed reaction is tRNA(Ala) + L-alanine + ATP = L-alanyl-tRNA(Ala) + AMP + diphosphate. Functionally, catalyzes the attachment of alanine to tRNA(Ala) in a two-step reaction: alanine is first activated by ATP to form Ala-AMP and then transferred to the acceptor end of tRNA(Ala). Also edits incorrectly charged Ser-tRNA(Ala) and Gly-tRNA(Ala) via its editing domain. The protein is Alanine--tRNA ligase of Actinobacillus pleuropneumoniae serotype 5b (strain L20).